Reading from the N-terminus, the 503-residue chain is Probable inactive beta-glucosidase 33 (503 aa).

The signal sequence occupies residues 1-30; sequence MATGELALVSSLFIVVVFLLLGAVAREASA. Residues Gln50, His150, and 195–196 each bind a beta-D-glucoside; that span reads NQ. The cysteines at positions 215 and 223 are disulfide-linked. N-linked (GlcNAc...) asparagine glycosylation is present at Asn222. A beta-D-glucoside-binding residues include Tyr339 and Glu399. Catalysis depends on Glu399, which acts as the Nucleophile. Asn436 carries an N-linked (GlcNAc...) asparagine glycan. A beta-D-glucoside-binding positions include Trp446, 453–454, and Phe462; that span reads EF.

Belongs to the glycosyl hydrolase 1 family.

The protein is Probable inactive beta-glucosidase 33 (BGLU33) of Oryza sativa subsp. japonica (Rice).